Here is a 254-residue protein sequence, read N- to C-terminus: Pyridoxine 5'-phosphate synthase (254 aa).

Residue asparagine 12 participates in 3-amino-2-oxopropyl phosphate binding. Residue 14 to 15 (DH) coordinates 1-deoxy-D-xylulose 5-phosphate. Arginine 23 is a binding site for 3-amino-2-oxopropyl phosphate. Histidine 48 (proton acceptor) is an active-site residue. Residues arginine 50 and histidine 55 each coordinate 1-deoxy-D-xylulose 5-phosphate. The active-site Proton acceptor is glutamate 75. A 1-deoxy-D-xylulose 5-phosphate-binding site is contributed by threonine 105. The active-site Proton donor is histidine 199. 3-amino-2-oxopropyl phosphate is bound by residues glycine 200 and 221–222 (GF).

The protein belongs to the PNP synthase family. As to quaternary structure, homooctamer; tetramer of dimers.

It is found in the cytoplasm. It carries out the reaction 3-amino-2-oxopropyl phosphate + 1-deoxy-D-xylulose 5-phosphate = pyridoxine 5'-phosphate + phosphate + 2 H2O + H(+). It participates in cofactor biosynthesis; pyridoxine 5'-phosphate biosynthesis; pyridoxine 5'-phosphate from D-erythrose 4-phosphate: step 5/5. In terms of biological role, catalyzes the complicated ring closure reaction between the two acyclic compounds 1-deoxy-D-xylulose-5-phosphate (DXP) and 3-amino-2-oxopropyl phosphate (1-amino-acetone-3-phosphate or AAP) to form pyridoxine 5'-phosphate (PNP) and inorganic phosphate. This Rhodopseudomonas palustris (strain TIE-1) protein is Pyridoxine 5'-phosphate synthase.